The following is a 233-amino-acid chain: Small ribosomal subunit protein uS2c (233 aa).

The protein belongs to the universal ribosomal protein uS2 family.

Its subcellular location is the plastid. The protein localises to the chloroplast. This is Small ribosomal subunit protein uS2c (rps2) from Staurastrum punctulatum (Green alga).